Consider the following 834-residue polypeptide: Periplasmic nitrate reductase (834 aa).

The segment at residues 1–29 (MNLTRREFAKANAAAIAAAAAGLPILVRA) is a signal peptide (tat-type signal). Positions 41 to 97 (LDWNKAPCRFCGTGCSVMVATRDGQVVATHGDIKAEVNRGINCVKGYFLSKIMYGSD) constitute a 4Fe-4S Mo/W bis-MGD-type domain. Residues C48, C51, C55, and C83 each coordinate [4Fe-4S] cluster. Mo-bis(molybdopterin guanine dinucleotide)-binding positions include K85, Q152, N177, C181, 214–221 (WGSNMAEM), 245–249 (STFEH), 264–266 (QTD), M375, Q379, N485, 511–512 (SD), K534, D561, and 721–730 (TGRVLEHWHT). Substrate is bound at residue F797. Mo-bis(molybdopterin guanine dinucleotide) is bound by residues N805 and K822.

This sequence belongs to the prokaryotic molybdopterin-containing oxidoreductase family. NasA/NapA/NarB subfamily. Component of the periplasmic nitrate reductase NapAB complex composed of NapA and NapB. Requires [4Fe-4S] cluster as cofactor. The cofactor is Mo-bis(molybdopterin guanine dinucleotide). Post-translationally, predicted to be exported by the Tat system. The position of the signal peptide cleavage has not been experimentally proven.

The protein resides in the periplasm. The enzyme catalyses 2 Fe(II)-[cytochrome] + nitrate + 2 H(+) = 2 Fe(III)-[cytochrome] + nitrite + H2O. In terms of biological role, catalytic subunit of the periplasmic nitrate reductase complex NapAB. Receives electrons from NapB and catalyzes the reduction of nitrate to nitrite. The polypeptide is Periplasmic nitrate reductase (Pseudomonas paraeruginosa (strain DSM 24068 / PA7) (Pseudomonas aeruginosa (strain PA7))).